The following is a 326-amino-acid chain: Phospho-N-acetylmuramoyl-pentapeptide-transferase (326 aa).

Helical transmembrane passes span 3-23, 51-71, 79-99, 115-135, 138-158, 169-189, 195-215, 221-243, and 306-326; these read ISISAGIVTFLLTLVEIPAFI, TMGGLVFLITSVLVAFFFALF, VGMILFILVLYGLVGFLDDFL, LALQLLGGVIFYLFYERGGDI, VFGYPVHLGFFYIFFALFWLV, GVDGLASISVVISLSAYGVIA, MDILLVILAMIGGLLGFFIFN, VFMGDVGSLALGGMLAAISMALH, and FFFWGVGLLASLLTLAILYLM.

It belongs to the glycosyltransferase 4 family. MraY subfamily. Requires Mg(2+) as cofactor.

The protein resides in the cell membrane. It carries out the reaction UDP-N-acetyl-alpha-D-muramoyl-L-alanyl-gamma-D-glutamyl-L-lysyl-D-alanyl-D-alanine + di-trans,octa-cis-undecaprenyl phosphate = Mur2Ac(oyl-L-Ala-gamma-D-Glu-L-Lys-D-Ala-D-Ala)-di-trans,octa-cis-undecaprenyl diphosphate + UMP. The protein operates within cell wall biogenesis; peptidoglycan biosynthesis. Catalyzes the initial step of the lipid cycle reactions in the biosynthesis of the cell wall peptidoglycan: transfers peptidoglycan precursor phospho-MurNAc-pentapeptide from UDP-MurNAc-pentapeptide onto the lipid carrier undecaprenyl phosphate, yielding undecaprenyl-pyrophosphoryl-MurNAc-pentapeptide, known as lipid I. This is Phospho-N-acetylmuramoyl-pentapeptide-transferase from Streptococcus pneumoniae (strain 70585).